A 428-amino-acid polypeptide reads, in one-letter code: Trigger factor (428 aa).

Residues 166–250 (GDIVTFDFKG…IKNIKEKILP (85 aa)) form the PPIase FKBP-type domain.

This sequence belongs to the FKBP-type PPIase family. Tig subfamily.

It is found in the cytoplasm. The enzyme catalyses [protein]-peptidylproline (omega=180) = [protein]-peptidylproline (omega=0). In terms of biological role, involved in protein export. Acts as a chaperone by maintaining the newly synthesized protein in an open conformation. Functions as a peptidyl-prolyl cis-trans isomerase. This Mycoplasma capricolum subsp. capricolum (strain California kid / ATCC 27343 / NCTC 10154) protein is Trigger factor.